The following is a 100-amino-acid chain: Urease subunit gamma (100 aa).

It belongs to the urease gamma subunit family. In terms of assembly, heterotrimer of UreA (gamma), UreB (beta) and UreC (alpha) subunits. Three heterotrimers associate to form the active enzyme.

It localises to the cytoplasm. The catalysed reaction is urea + 2 H2O + H(+) = hydrogencarbonate + 2 NH4(+). It participates in nitrogen metabolism; urea degradation; CO(2) and NH(3) from urea (urease route): step 1/1. The chain is Urease subunit gamma from Alcanivorax borkumensis (strain ATCC 700651 / DSM 11573 / NCIMB 13689 / SK2).